The primary structure comprises 602 residues: Bifunctional lycopene cyclase/phytoene synthase (602 aa).

Residues 1–241 (MYDYAFVHLK…IVGGMAAFDQ (241 aa)) form a lycopene beta-cyclase region. 7 helical membrane-spanning segments follow: residues 6-26 (FVHLKFTVPAAVLLTAIAYPI), 30-50 (IHLIQTGFLVVVAFTAALPWD), 76-96 (FEELFFFVIQTYITALVYILF), 118-138 (VVKVTGQVVLVALSVWGWNAA), 146-166 (YLGLILVWACPFLLAIWTLAG), 168-188 (FILSLPWYATVLPMFLPTFYL), and 230-250 (MLIVGGMAAFDQYLAVIYAFP). The interval 248–602 (AFPTLFPKVN…STLLRALYEQ (355 aa)) is phytoene synthase.

This sequence in the N-terminal section; belongs to the lycopene beta-cyclase family. The protein in the C-terminal section; belongs to the phytoene/squalene synthase family.

The protein localises to the membrane. The catalysed reaction is all-trans-lycopene = gamma-carotene. It carries out the reaction gamma-carotene = all-trans-beta-carotene. The enzyme catalyses 2 (2E,6E,10E)-geranylgeranyl diphosphate = 15-cis-phytoene + 2 diphosphate. The protein operates within carotenoid biosynthesis; beta-carotene biosynthesis. It participates in carotenoid biosynthesis; phytoene biosynthesis; all-trans-phytoene from geranylgeranyl diphosphate: step 1/1. Its function is as follows. Bifunctional enzyme that catalyzes the reactions from geranylgeranyl diphosphate to phytoene (phytoene synthase) and from lycopene to beta-carotene via the intermediate gamma-carotene and from 3,4-didehydrolycopene to torulene (lycopene cyclase). Torulene is further processed to the acidic carotenoid neurosporaxanthin. The cyclase preferentially catalyzes single cyclizations at only one end of the substrate to produce monocyclic carotenoids. Neurosporaxanthin is synthesized from geranyl-geranyl pyrophosphate (GGPP) through several enzymatic activities. Phytoene synthase activity performed by the bifunctional enzyme al-2 first produces phytoene from geranyl-geranyl pyrophosphate (GGPP). The phytoene dehydrogenase al-1 then introduces 5 desaturations to lead to 3,4-didehydrolycopene via the intermediates phytofluene, zeta-carotene, neurosporene and lycopene. Al-2 cyclase activity then converts 3,4-didehydrolycopene into torulene. Al-2 can also convet lycopene into gamma-carotene which in turn is converted to beta-carotene by an additional al-2 cyclization reaction. Torulene is the substrate of the dioxidase cao-2 that breaks the molecule, removing five carbon atoms to yield beta-apo-4'-carotenal, whereas the aldehyde dehydrogenase ylo-1 mediates the last step by converting beta-apo-4'-carotenal into neurosporaxanthin. This chain is Bifunctional lycopene cyclase/phytoene synthase, found in Neurospora crassa (strain ATCC 24698 / 74-OR23-1A / CBS 708.71 / DSM 1257 / FGSC 987).